Reading from the N-terminus, the 213-residue chain is MEKTEIVRKYVEKLINSPINLTAYKDFDEAMAFLYLDSVLPVKSEDLGEFFLDIGTGGGVPGVFLSVEFDKKGLLVDSICKKVHFIQQTCKELGIKKVETLCARAEELKGKGDFFEKFDSAVSRAVSKIATVLELTAPYVKVGGKLLLYKGPGYNEELGQSVNAMKELGVKLSEVRRYSIRGKDRFLLVFEKISHTPDKYPRRIGIPEKRPIR.

S-adenosyl-L-methionine-binding positions include Gly-55, 105–106 (AE), and Arg-124.

It belongs to the methyltransferase superfamily. RNA methyltransferase RsmG family.

The protein resides in the cytoplasm. Its function is as follows. Specifically methylates the N7 position of a guanine in 16S rRNA. This chain is Ribosomal RNA small subunit methyltransferase G, found in Fervidobacterium nodosum (strain ATCC 35602 / DSM 5306 / Rt17-B1).